Here is a 284-residue protein sequence, read N- to C-terminus: Tropomyosin alpha-1 chain (284 aa).

The residue at position 1 (M1) is an N-acetylmethionine. The tract at residues 1-38 (MDAIKKKMQMLKLDKENALDRAEQAEADKKAAEDRSKQ) is disordered. The stretch at 1–284 (MDAIKKKMQM…DHALNDMTSI (284 aa)) forms a coiled coil. Basic and acidic residues predominate over residues 12–38 (KLDKENALDRAEQAEADKKAAEDRSKQ). S45 carries the phosphoserine modification. The tract at residues 116-136 (AEKAADESERGMKVIESRAQK) is disordered. A phosphoserine mark is found at S174, S186, S206, and S252. Y261 is subject to Phosphotyrosine. Phosphoserine is present on residues S271 and S283.

It belongs to the tropomyosin family. As to quaternary structure, homodimer. Heterodimer of an alpha (TPM1, TPM3 or TPM4) and a beta (TPM2) chain. Interacts with HRG (via the HRR domain); the interaction contributes to the antiangiogenic properties of the histidine/proline-rich region (HRR) of HRG. Interacts (via N-terminus) with LMOD2 (via N-terminus) and TMOD1 (via N-terminus). Post-translationally, phosphorylated at Ser-283 by DAPK1 in response to oxidative stress and this phosphorylation enhances stress fiber formation in endothelial cells.

The protein resides in the cytoplasm. The protein localises to the cytoskeleton. In terms of biological role, binds to actin filaments in muscle and non-muscle cells. Plays a central role, in association with the troponin complex, in the calcium dependent regulation of vertebrate striated muscle contraction. Smooth muscle contraction is regulated by interaction with caldesmon. In non-muscle cells is implicated in stabilizing cytoskeleton actin filaments. This Mus musculus (Mouse) protein is Tropomyosin alpha-1 chain (Tpm1).